Here is a 358-residue protein sequence, read N- to C-terminus: Cholesterol galactosyltransferase (358 aa).

Belongs to the glycosyltransferase 2 family.

The enzyme catalyses cholesterol + UDP-alpha-D-galactose = cholesteryl 3-beta-D-galactoside + UDP + H(+). It functions in the pathway glycolipid biosynthesis. In terms of biological role, galactosyltransferase involved in the synthesis of cholesterol glycolipids, which are formed by the use of host-derived cholesterol and have been shown to be immunogenic, and possibly contribute to Lyme disease pathogenesis. Catalyzes the formation of cholesteryl beta-D-galactopyranoside (CGal) from cholesterol and UDP-alpha-D-galactose. Cannot use GDP-mannose. The polypeptide is Cholesterol galactosyltransferase (Borreliella burgdorferi (strain ATCC 35210 / DSM 4680 / CIP 102532 / B31) (Borrelia burgdorferi)).